We begin with the raw amino-acid sequence, 544 residues long: CTP synthase (544 aa).

Residues methionine 1–leucine 267 are amidoligase domain. Serine 13 contacts CTP. Serine 13 is a UTP binding site. ATP contacts are provided by residues serine 14 to isoleucine 19 and aspartate 71. Mg(2+) contacts are provided by aspartate 71 and glutamate 141. CTP-binding positions include aspartate 148–glutamate 150, lysine 188–glutamine 193, and lysine 224. Residues lysine 188–glutamine 193 and lysine 224 each bind UTP. One can recognise a Glutamine amidotransferase type-1 domain in the interval lysine 292–serine 534. Glycine 354 lines the L-glutamine pocket. Residue cysteine 381 is the Nucleophile; for glutamine hydrolysis of the active site. L-glutamine-binding positions include leucine 382 to glutamine 385, glutamate 405, and arginine 462. Active-site residues include histidine 507 and glutamate 509.

Belongs to the CTP synthase family. Homotetramer.

The enzyme catalyses UTP + L-glutamine + ATP + H2O = CTP + L-glutamate + ADP + phosphate + 2 H(+). It carries out the reaction L-glutamine + H2O = L-glutamate + NH4(+). It catalyses the reaction UTP + NH4(+) + ATP = CTP + ADP + phosphate + 2 H(+). It functions in the pathway pyrimidine metabolism; CTP biosynthesis via de novo pathway; CTP from UDP: step 2/2. Allosterically activated by GTP, when glutamine is the substrate; GTP has no effect on the reaction when ammonia is the substrate. The allosteric effector GTP functions by stabilizing the protein conformation that binds the tetrahedral intermediate(s) formed during glutamine hydrolysis. Inhibited by the product CTP, via allosteric rather than competitive inhibition. Its function is as follows. Catalyzes the ATP-dependent amination of UTP to CTP with either L-glutamine or ammonia as the source of nitrogen. Regulates intracellular CTP levels through interactions with the four ribonucleotide triphosphates. In Parasynechococcus marenigrum (strain WH8102), this protein is CTP synthase.